We begin with the raw amino-acid sequence, 132 residues long: Regulator of ribonuclease activity B (132 aa).

This sequence belongs to the RraB family. Interacts with the C-terminal region of Rne.

The protein localises to the cytoplasm. Globally modulates RNA abundance by binding to RNase E (Rne) and regulating its endonucleolytic activity. Can modulate Rne action in a substrate-dependent manner by altering the composition of the degradosome. The sequence is that of Regulator of ribonuclease activity B from Alteromonas mediterranea (strain DSM 17117 / CIP 110805 / LMG 28347 / Deep ecotype).